Here is a 456-residue protein sequence, read N- to C-terminus: Histidine--tRNA ligase (456 aa).

This sequence belongs to the class-II aminoacyl-tRNA synthetase family. As to quaternary structure, homodimer.

The protein localises to the cytoplasm. It catalyses the reaction tRNA(His) + L-histidine + ATP = L-histidyl-tRNA(His) + AMP + diphosphate + H(+). The sequence is that of Histidine--tRNA ligase from Christiangramia forsetii (strain DSM 17595 / CGMCC 1.15422 / KT0803) (Gramella forsetii).